The primary structure comprises 283 residues: Alpha-ketoglutarate-dependent taurine dioxygenase (283 aa).

Taurine is bound by residues His-70, Tyr-73, and Asn-95. Fe cation is bound by residues His-99 and Asp-101. A taurine-binding site is contributed by Val-102. 2-oxoglutarate is bound at residue Thr-126. A 3-hydroxytryptophan; by autocatalysis mark is found at Trp-128, Trp-240, and Trp-248. A Fe cation-binding site is contributed by His-255. The 2-oxoglutarate site is built by His-255, Arg-266, and Arg-270. Arg-270 is a taurine binding site.

Belongs to the TfdA dioxygenase family. As to quaternary structure, homodimer. Was later shown to be a homotetramer arranged as a dimer of two dimers. Fe(2+) serves as cofactor.

The enzyme catalyses taurine + 2-oxoglutarate + O2 = aminoacetaldehyde + sulfite + succinate + CO2 + H(+). The protein operates within organosulfur degradation; taurine degradation via aerobic pathway; aminoacetaldehyde and sulfite from taurine: step 1/1. Activated by ascorbate and inhibited by divalent metal ions such as zinc, copper and cobalt. Functionally, catalyzes the alpha-ketoglutarate-dependent hydroxylation of taurine yielding sulfite and aminoacetaldehyde after decomposition of an unstable intermediate. Is required for the utilization of taurine (2-aminoethanesulfonate) as an alternative sulfur source for growth in the absence of sulfate. To a lesser extent, pentanesulfonate, 3-(N-morpholino)propanesulfonate and 1,3-dioxo-2-isoindolineethanesulfonate are also desulfonated by this enzyme in vitro; however, desulfonation by TauD of organosulfonates other than taurine seem to be of little or no importance for sulfur metabolism in vivo. This is Alpha-ketoglutarate-dependent taurine dioxygenase (tauD) from Escherichia coli (strain K12).